The primary structure comprises 340 residues: UDP-N-acetylenolpyruvoylglucosamine reductase (340 aa).

Positions 11 to 181 (ISVKAKKIIS…VAIGLKLKKK (171 aa)) constitute an FAD-binding PCMH-type domain. Arg156 is a catalytic residue. Catalysis depends on Ser227, which acts as the Proton donor. The active site involves Glu323.

It belongs to the MurB family. Requires FAD as cofactor.

Its subcellular location is the cytoplasm. It catalyses the reaction UDP-N-acetyl-alpha-D-muramate + NADP(+) = UDP-N-acetyl-3-O-(1-carboxyvinyl)-alpha-D-glucosamine + NADPH + H(+). Its pathway is cell wall biogenesis; peptidoglycan biosynthesis. Cell wall formation. This is UDP-N-acetylenolpyruvoylglucosamine reductase from Wigglesworthia glossinidia brevipalpis.